The chain runs to 83 residues: uncharacterized protein (83 aa).

This is an uncharacterized protein from Acidianus bottle-shaped virus (isolate Italy/Pozzuoli) (ABV).